The chain runs to 142 residues: HTH-type transcriptional regulator MntR (142 aa).

The 63-residue stretch at 1–63 (MPTPSMEDYI…YEKYRGLVLT (63 aa)) folds into the HTH dtxR-type domain. Aspartate 8, glutamate 11, histidine 77, glutamate 99, glutamate 102, and histidine 103 together coordinate Mn(2+).

This sequence belongs to the DtxR/MntR family. As to quaternary structure, homodimer.

It is found in the cytoplasm. Its activity is regulated as follows. DNA binding is strongly activated by Mn(2+). Its function is as follows. Central regulator of manganese homeostasis. This Bacillus cereus (strain AH820) protein is HTH-type transcriptional regulator MntR.